The following is a 354-amino-acid chain: MAATLPRDRLRQITDRFEYLEAQLNGGPDPSDIAKISREYAELKPVVAEIAGYEQLLADMAEAQNMLADPDMRPLAEEELPRLEAAIPAAEQSLQLALLPKDAADAKPAMIEIRPGTGGDEAALFAGDLLRMYTRYAEARGWRLEIVDLQESDLGGIKECTARVEGENVFARLKFESGVHRVQRVPETESGGRIHTSAATVAVLPEAEDVDIDIPATDIRIDTMRASGAGGQHVNTTDSAVRITHVPSGIVVVSSEKSQHRNREIAMQTLRTRLYDLERQKADDAMAADRKAQIGSGDRSERIRTYNFPQGRMTDHRINLTLYKLDAVMLGDLDEIVDALTAEDQAMKLAEMTG.

The residue at position 232 (glutamine 232) is an N5-methylglutamine.

It belongs to the prokaryotic/mitochondrial release factor family. Post-translationally, methylated by PrmC. Methylation increases the termination efficiency of RF1.

It is found in the cytoplasm. In terms of biological role, peptide chain release factor 1 directs the termination of translation in response to the peptide chain termination codons UAG and UAA. The protein is Peptide chain release factor 1 of Jannaschia sp. (strain CCS1).